The sequence spans 433 residues: O-methyltransferase hasC (433 aa).

Residues Glu-265 and 293–295 (GDF) contribute to the S-adenosyl-L-methionine site. The active-site Proton acceptor is His-313. The disordered stretch occupies residues 413-433 (SPRANGNGNSAGGLEWESELM).

It belongs to the class I-like SAM-binding methyltransferase superfamily. Cation-independent O-methyltransferase family. COMT subfamily.

The protein operates within secondary metabolite biosynthesis. In terms of biological role, O-methyltransferase; part of the gene cluster that mediates the biosynthesis of hexadehydro-astechrome (HAS), a tryptophan-derived iron(III)-complex that acts as a virulence factor in infected mice. Within the pathway, hasC, with the cytochrome P450 monooxygenase hasH and the FAD-linked oxidoreductase hasG, convert the hasE-prenylated Trp-Ala-dipeptide into an O-methylated diketopiperazine that is then released from the hasD NRPS. The HAS biosynthesis begins with the synthesis of a tethered Trp-Ala dipeptide by the NRPS hasD. The 7-dimethylallyltryptophan synthase hasE then catalyzes the prenylation of the hasD-tethered tryptophan or the resulting tethered Trp-Ala dipeptide at the C-7 position of the indole moiety. HAS biosynthesis continues via tethered intermediates with the succesive actions of the cytochrome P450 monooxygenase hasH, the O-methyltransferase hasC, and the FAD-linked oxidoreductase hasG. The resulting O-methylated diketopiperazine is then released from hasD. Finally, three O-methylated diketopiperazine molecules assemble in a trimeric complex with Fe(III) to produce hexadehydro-astechrome. In Aspergillus fumigatus (strain CBS 144.89 / FGSC A1163 / CEA10) (Neosartorya fumigata), this protein is O-methyltransferase hasC.